The following is a 141-amino-acid chain: Nucleoside diphosphate kinase (141 aa).

Lys11, Phe59, Arg87, Thr93, Arg104, and Asn114 together coordinate ATP. Residue His117 is the Pros-phosphohistidine intermediate of the active site.

It belongs to the NDK family. As to quaternary structure, homotetramer. It depends on Mg(2+) as a cofactor.

Its subcellular location is the cytoplasm. It catalyses the reaction a 2'-deoxyribonucleoside 5'-diphosphate + ATP = a 2'-deoxyribonucleoside 5'-triphosphate + ADP. The catalysed reaction is a ribonucleoside 5'-diphosphate + ATP = a ribonucleoside 5'-triphosphate + ADP. Major role in the synthesis of nucleoside triphosphates other than ATP. The ATP gamma phosphate is transferred to the NDP beta phosphate via a ping-pong mechanism, using a phosphorylated active-site intermediate. The chain is Nucleoside diphosphate kinase from Laribacter hongkongensis (strain HLHK9).